A 693-amino-acid polypeptide reads, in one-letter code: Serine/threonine-protein kinase Pkn1 (693 aa).

One can recognise a Protein kinase domain in the interval 59–328 (FRLVRRLGRG…QVALAEHVRV (270 aa)). Residues 65–73 (LGRGGMGAV) and Lys-88 each bind ATP. Asp-180 acts as the Proton acceptor in catalysis. In terms of domain architecture, PilZ spans 393–491 (LVEVPVQVVL…LKAAVDALLQ (99 aa)). The stretch at 630–663 (ARSHFQSGGALERDGQLSQALDQYERGLKLAPLE) is one TPR repeat.

It belongs to the protein kinase superfamily. Ser/Thr protein kinase family. In terms of processing, autophosphorylated.

It carries out the reaction L-seryl-[protein] + ATP = O-phospho-L-seryl-[protein] + ADP + H(+). It catalyses the reaction L-threonyl-[protein] + ATP = O-phospho-L-threonyl-[protein] + ADP + H(+). May be regulated by calcium or a calmodulin-like protein. Its function is as follows. Plays an essential role in proper timing of early development events. This is Serine/threonine-protein kinase Pkn1 (pkn1) from Myxococcus xanthus.